Reading from the N-terminus, the 183-residue chain is ATP synthase subunit delta (183 aa).

Belongs to the ATPase delta chain family. As to quaternary structure, F-type ATPases have 2 components, F(1) - the catalytic core - and F(0) - the membrane proton channel. F(1) has five subunits: alpha(3), beta(3), gamma(1), delta(1), epsilon(1). F(0) has three main subunits: a(1), b(2) and c(10-14). The alpha and beta chains form an alternating ring which encloses part of the gamma chain. F(1) is attached to F(0) by a central stalk formed by the gamma and epsilon chains, while a peripheral stalk is formed by the delta and b chains.

The protein localises to the cell inner membrane. F(1)F(0) ATP synthase produces ATP from ADP in the presence of a proton or sodium gradient. F-type ATPases consist of two structural domains, F(1) containing the extramembraneous catalytic core and F(0) containing the membrane proton channel, linked together by a central stalk and a peripheral stalk. During catalysis, ATP synthesis in the catalytic domain of F(1) is coupled via a rotary mechanism of the central stalk subunits to proton translocation. In terms of biological role, this protein is part of the stalk that links CF(0) to CF(1). It either transmits conformational changes from CF(0) to CF(1) or is implicated in proton conduction. The sequence is that of ATP synthase subunit delta from Desulfatibacillum aliphaticivorans.